The following is a 1181-amino-acid chain: Integrin alpha-2 (1181 aa).

The N-terminal stretch at 1–29 (MGPERTGAAPLPLLLVLALSQGILNCCLA) is a signal peptide. The Extracellular portion of the chain corresponds to 30 to 1132 (YNVGLPEAKI…KPDEKAEVPT (1103 aa)). 2 FG-GAP repeats span residues 34 to 92 (LPEA…TATC) and 101 to 161 (TSIP…LSAS). Cys-83 and Cys-92 are oxidised to a cystine. 3 N-linked (GlcNAc...) asparagine glycosylation sites follow: Asn-105, Asn-112, and Asn-343. Residues 188–365 (WDAVKNFLEK…TLGEQIFSIE (178 aa)) enclose the VWFA domain. 5 FG-GAP repeats span residues 366-420 (GTVQ…LIFP), 423-475 (AFDQ…ENGN), 477-539 (TVIQ…ILGQ), 540-598 (HQFL…TIRT), and 602-664 (QKIL…FTPE). N-linked (GlcNAc...) asparagine glycans are attached at residues Asn-432, Asn-460, and Asn-475. Residues Asp-499, Asp-501, Asp-503, Asp-507, Asp-563, Asn-565, Asp-567, Asp-571, Asp-627, Asn-629, Asp-631, and Asp-635 each coordinate Ca(2+). Intrachain disulfides connect Cys-680–Cys-737, Cys-789–Cys-795, Cys-865–Cys-876, Cys-1019–Cys-1050, and Cys-1055–Cys-1060. Residue Asn-699 is glycosylated (N-linked (GlcNAc...) asparagine). 3 N-linked (GlcNAc...) asparagine glycosylation sites follow: Asn-1057, Asn-1074, and Asn-1081. The helical transmembrane segment at 1133-1154 (GVIIGSIIAGILLLLALVAILW) threads the bilayer. The segment at 1155–1161 (KLGFFKR) is interaction with HPS5. Residues 1155–1181 (KLGFFKRKYEKMTKNPDEIDETTELSS) lie on the Cytoplasmic side of the membrane. Positions 1157 to 1161 (GFFKR) match the GFFKR motif motif.

It belongs to the integrin alpha chain family. In terms of assembly, heterodimer of an alpha and a beta subunit. Alpha-2 associates with beta-1. Interacts with HPS5 and RAB21. (Microbial infection) Integrin ITGA2:ITGB1 interacts (via ITAG2 I-domain) with rotavirus A VP4 protein. As to quaternary structure, (Microbial infection) Integrin ITGA2:ITGB1 interacts with human echoviruses 1 and 8 capsid proteins.

The protein resides in the membrane. Integrin alpha-2/beta-1 is a receptor for laminin, collagen, collagen C-propeptides, fibronectin and E-cadherin. It recognizes the proline-hydroxylated sequence G-F-P-G-E-R in collagen. It is responsible for adhesion of platelets and other cells to collagens, modulation of collagen and collagenase gene expression, force generation and organization of newly synthesized extracellular matrix. In terms of biological role, (Microbial infection) Integrin ITGA2:ITGB1 acts as a receptor for Human rotavirus A. Functionally, (Microbial infection) Integrin ITGA2:ITGB1 acts as a receptor for Human echoviruses 1 and 8. This is Integrin alpha-2 (ITGA2) from Homo sapiens (Human).